The sequence spans 402 residues: Phosphoglycerate kinase (402 aa).

Substrate contacts are provided by residues 24 to 26 (DFN), Arg40, 63 to 66 (HFGR), Arg122, and Arg155. ATP is bound by residues Lys206, Gly297, Glu328, and 357 to 360 (GGDS).

Belongs to the phosphoglycerate kinase family. Monomer.

It localises to the cytoplasm. The enzyme catalyses (2R)-3-phosphoglycerate + ATP = (2R)-3-phospho-glyceroyl phosphate + ADP. The protein operates within carbohydrate degradation; glycolysis; pyruvate from D-glyceraldehyde 3-phosphate: step 2/5. In Prochlorococcus marinus (strain MIT 9211), this protein is Phosphoglycerate kinase.